A 94-amino-acid chain; its full sequence is Selenoprotein K (94 aa).

A helical transmembrane segment spans residues Leu-20 to Leu-42. Residues Lys-47–Arg-94 form a disordered region. Residue Sec-92 is a non-standard amino acid, selenocysteine.

This sequence belongs to the selenoprotein K family. Interacts with DERL1, DERL2, DERL3 and SELENOS. The SELENOK-SELENOS complex interacts with VCP. Interacts with ZDHHC6. Post-translationally, cleaved by CAPN2/m-calpain in resting macrophages but not in activated macrophages. Macrophage activation up-regulates expression of the calpain inhibitor CAST/calpastatin, resulting in inhibition of CAPN2 activity. Truncated SELENOK proteins produced by failed UGA/Sec decoding are ubiquitinated by the CRL2(KLHDC2) complex, which recognizes the diglycine (Gly-Gly) at the C-terminus of truncated SELENOK proteins.

It is found in the endoplasmic reticulum membrane. The protein resides in the cell membrane. Required for Ca(2+) flux in immune cells and plays a role in T-cell proliferation and in T-cell and neutrophil migration. Involved in endoplasmic reticulum-associated degradation (ERAD) of soluble glycosylated proteins. Required for palmitoylation and cell surface expression of CD36 and involved in macrophage uptake of low-density lipoprotein and in foam cell formation. Together with ZDHHC6, required for palmitoylation of ITPR1 in immune cells, leading to regulate ITPR1 stability and function. Plays a role in protection of cells from ER stress-induced apoptosis. Protects cells from oxidative stress when overexpressed in cardiomyocytes. This Chinchilla lanigera (Long-tailed chinchilla) protein is Selenoprotein K.